Here is a 443-residue protein sequence, read N- to C-terminus: 23S rRNA (uracil(1939)-C(5))-methyltransferase RlmD (443 aa).

A TRAM domain is found at arginine 10–arginine 68. Cysteine 81, cysteine 87, cysteine 90, and cysteine 168 together coordinate [4Fe-4S] cluster. The S-adenosyl-L-methionine site is built by glutamine 271, phenylalanine 300, asparagine 305, glutamate 321, asparagine 348, and aspartate 369. Catalysis depends on cysteine 395, which acts as the Nucleophile.

The protein belongs to the class I-like SAM-binding methyltransferase superfamily. RNA M5U methyltransferase family. RlmD subfamily.

It catalyses the reaction uridine(1939) in 23S rRNA + S-adenosyl-L-methionine = 5-methyluridine(1939) in 23S rRNA + S-adenosyl-L-homocysteine + H(+). In terms of biological role, catalyzes the formation of 5-methyl-uridine at position 1939 (m5U1939) in 23S rRNA. The protein is 23S rRNA (uracil(1939)-C(5))-methyltransferase RlmD of Yersinia enterocolitica serotype O:8 / biotype 1B (strain NCTC 13174 / 8081).